Reading from the N-terminus, the 251-residue chain is Imidazole glycerol phosphate synthase subunit HisF (251 aa).

Catalysis depends on residues aspartate 11 and aspartate 130.

The protein belongs to the HisA/HisF family. In terms of assembly, heterodimer of HisH and HisF.

Its subcellular location is the cytoplasm. It catalyses the reaction 5-[(5-phospho-1-deoxy-D-ribulos-1-ylimino)methylamino]-1-(5-phospho-beta-D-ribosyl)imidazole-4-carboxamide + L-glutamine = D-erythro-1-(imidazol-4-yl)glycerol 3-phosphate + 5-amino-1-(5-phospho-beta-D-ribosyl)imidazole-4-carboxamide + L-glutamate + H(+). It participates in amino-acid biosynthesis; L-histidine biosynthesis; L-histidine from 5-phospho-alpha-D-ribose 1-diphosphate: step 5/9. In terms of biological role, IGPS catalyzes the conversion of PRFAR and glutamine to IGP, AICAR and glutamate. The HisF subunit catalyzes the cyclization activity that produces IGP and AICAR from PRFAR using the ammonia provided by the HisH subunit. This Parabacteroides distasonis (strain ATCC 8503 / DSM 20701 / CIP 104284 / JCM 5825 / NCTC 11152) protein is Imidazole glycerol phosphate synthase subunit HisF.